A 151-amino-acid chain; its full sequence is Nucleoside diphosphate kinase (151 aa).

6 residues coordinate ATP: Lys-10, Phe-58, Arg-86, Thr-92, Arg-103, and Asn-113. His-116 (pros-phosphohistidine intermediate) is an active-site residue.

It belongs to the NDK family. As to quaternary structure, homotetramer. Requires Mg(2+) as cofactor.

The protein localises to the cytoplasm. It carries out the reaction dZDP + ATP = dZTP + ADP. The catalysed reaction is a 2'-deoxyribonucleoside 5'-diphosphate + ATP = a 2'-deoxyribonucleoside 5'-triphosphate + ADP. The enzyme catalyses a ribonucleoside 5'-diphosphate + ATP = a ribonucleoside 5'-triphosphate + ADP. It participates in purine metabolism. Major role in the synthesis of nucleoside triphosphates other than ATP. The ATP gamma phosphate is transferred to the NDP beta phosphate via a ping-pong mechanism, using a phosphorylated active-site intermediate. Functionally, (Microbial infection) Catalyzes the phosphorylation of dZDP to dZTP, when the bacterium is infected by a phage that produces the substrate for the synthesis of dZTP (2- amino-2'-deoxyadenosine 5'-triphosphate), which is then used by the phage as a DNA polymerase substrate. This chain is Nucleoside diphosphate kinase, found in Synechococcus sp. (strain CC9902).